Here is a 263-residue protein sequence, read N- to C-terminus: HTH-type transcriptional repressor NanR (263 aa).

The interval Met1–Leu22 is disordered. In terms of domain architecture, HTH gntR-type spans Lys30 to Pro98. The segment at residues Glu58–Ala77 is a DNA-binding region (H-T-H motif).

This sequence belongs to the NanR family.

Its function is as follows. Transcriptional repressor that controls expression of the genes required for the catabolism of sialic acids. The chain is HTH-type transcriptional repressor NanR from Shigella dysenteriae serotype 1 (strain Sd197).